Reading from the N-terminus, the 274-residue chain is Ribosomal RNA small subunit methyltransferase A (274 aa).

The S-adenosyl-L-methionine site is built by histidine 15, leucine 17, glycine 42, glutamate 64, aspartate 89, and asparagine 108.

The protein belongs to the class I-like SAM-binding methyltransferase superfamily. rRNA adenine N(6)-methyltransferase family. RsmA subfamily.

The protein resides in the cytoplasm. It catalyses the reaction adenosine(1518)/adenosine(1519) in 16S rRNA + 4 S-adenosyl-L-methionine = N(6)-dimethyladenosine(1518)/N(6)-dimethyladenosine(1519) in 16S rRNA + 4 S-adenosyl-L-homocysteine + 4 H(+). Specifically dimethylates two adjacent adenosines (A1518 and A1519) in the loop of a conserved hairpin near the 3'-end of 16S rRNA in the 30S particle. May play a critical role in biogenesis of 30S subunits. This chain is Ribosomal RNA small subunit methyltransferase A, found in Prochlorococcus marinus (strain MIT 9301).